Reading from the N-terminus, the 360-residue chain is GTPase Obg (360 aa).

The 156-residue stretch at 1-156 folds into the Obg domain; it reads MFVDSVEIII…KCVRLELKLI (156 aa). Positions 157–360 constitute an OBG-type G domain; that stretch reads ADIGLVGFPN…LKFVLLEALP (204 aa). GTP is bound by residues 163 to 170, 188 to 192, 210 to 213, 279 to 282, and 341 to 343; these read GFPNAGKS, FTTLV, DIPG, NKCD, and SAV. The Mg(2+) site is built by Ser-170 and Thr-190.

This sequence belongs to the TRAFAC class OBG-HflX-like GTPase superfamily. OBG GTPase family. Monomer. The cofactor is Mg(2+).

It is found in the cytoplasm. In terms of biological role, an essential GTPase which binds GTP, GDP and possibly (p)ppGpp with moderate affinity, with high nucleotide exchange rates and a fairly low GTP hydrolysis rate. Plays a role in control of the cell cycle, stress response, ribosome biogenesis and in those bacteria that undergo differentiation, in morphogenesis control. The polypeptide is GTPase Obg (Helicobacter pylori (strain HPAG1)).